Consider the following 371-residue polypeptide: tRNA (guanine(26)-N(2))-dimethyltransferase (371 aa).

One can recognise a Trm1 methyltransferase domain in the interval 4-368; it reads IEVTEGRTTF…APLDAIAAAL (365 aa). S-adenosyl-L-methionine-binding residues include Arg-41, Arg-66, Asp-82, Asp-108, and Ala-109. Zn(2+)-binding residues include Cys-237, Cys-240, Cys-256, and Cys-259.

This sequence belongs to the class I-like SAM-binding methyltransferase superfamily. Trm1 family.

The enzyme catalyses guanosine(26) in tRNA + 2 S-adenosyl-L-methionine = N(2)-dimethylguanosine(26) in tRNA + 2 S-adenosyl-L-homocysteine + 2 H(+). Functionally, dimethylates a single guanine residue at position 26 of a number of tRNAs using S-adenosyl-L-methionine as donor of the methyl groups. The polypeptide is tRNA (guanine(26)-N(2))-dimethyltransferase (Methanosphaerula palustris (strain ATCC BAA-1556 / DSM 19958 / E1-9c)).